Reading from the N-terminus, the 83-residue chain is MKTSMFLTLTGLVLLFVVCYASESEEKEFPKELLSSIFAADSDFKVEERGCLGDKCDYNNGCCSGYVCSRTWKWCVLAGPWCR.

An N-terminal signal peptide occupies residues 1–21 (MKTSMFLTLTGLVLLFVVCYA). The propeptide occupies 22 to 49 (SESEEKEFPKELLSSIFAADSDFKVEER). Cystine bridges form between Cys51/Cys63, Cys56/Cys68, and Cys62/Cys75.

Belongs to the neurotoxin 10 (Hwtx-1) family. 51 (Hntx-8) subfamily. Hntx-8 sub-subfamily. In terms of tissue distribution, expressed by the venom gland.

Its subcellular location is the secreted. In terms of biological role, agglutinates erythrocytes. The chain is U5-theraphotoxin-Hs1c from Cyriopagopus schmidti (Chinese bird spider).